The primary structure comprises 321 residues: Aspartate carbamoyltransferase catalytic subunit (321 aa).

Residues R64 and T65 each coordinate carbamoyl phosphate. K92 contributes to the L-aspartate binding site. Residues R114, H142, and Q145 each contribute to the carbamoyl phosphate site. Residues R175 and R229 each coordinate L-aspartate. Residues G270 and P271 each coordinate carbamoyl phosphate.

This sequence belongs to the aspartate/ornithine carbamoyltransferase superfamily. ATCase family. In terms of assembly, heterododecamer (2C3:3R2) of six catalytic PyrB chains organized as two trimers (C3), and six regulatory PyrI chains organized as three dimers (R2).

It catalyses the reaction carbamoyl phosphate + L-aspartate = N-carbamoyl-L-aspartate + phosphate + H(+). It participates in pyrimidine metabolism; UMP biosynthesis via de novo pathway; (S)-dihydroorotate from bicarbonate: step 2/3. In terms of biological role, catalyzes the condensation of carbamoyl phosphate and aspartate to form carbamoyl aspartate and inorganic phosphate, the committed step in the de novo pyrimidine nucleotide biosynthesis pathway. The polypeptide is Aspartate carbamoyltransferase catalytic subunit (Azorhizobium caulinodans (strain ATCC 43989 / DSM 5975 / JCM 20966 / LMG 6465 / NBRC 14845 / NCIMB 13405 / ORS 571)).